The sequence spans 209 residues: Shikimate kinase (209 aa).

47-52 (GAGKTT) contributes to the ATP binding site. Mg(2+) is bound at residue Thr-51. Positions 69, 93, and 115 each coordinate substrate. ATP is bound at residue Arg-153. Arg-172 contacts substrate.

It belongs to the shikimate kinase family. Monomer. Requires Mg(2+) as cofactor.

It localises to the cytoplasm. The enzyme catalyses shikimate + ATP = 3-phosphoshikimate + ADP + H(+). It functions in the pathway metabolic intermediate biosynthesis; chorismate biosynthesis; chorismate from D-erythrose 4-phosphate and phosphoenolpyruvate: step 5/7. Its function is as follows. Catalyzes the specific phosphorylation of the 3-hydroxyl group of shikimic acid using ATP as a cosubstrate. The chain is Shikimate kinase from Bordetella avium (strain 197N).